Here is a 244-residue protein sequence, read N- to C-terminus: Phosphoribosyl isomerase A (244 aa).

D10 functions as the Proton acceptor in the catalytic mechanism. D129 functions as the Proton donor in the catalytic mechanism.

The protein belongs to the HisA/HisF family.

It localises to the cytoplasm. It carries out the reaction 1-(5-phospho-beta-D-ribosyl)-5-[(5-phospho-beta-D-ribosylamino)methylideneamino]imidazole-4-carboxamide = 5-[(5-phospho-1-deoxy-D-ribulos-1-ylimino)methylamino]-1-(5-phospho-beta-D-ribosyl)imidazole-4-carboxamide. It catalyses the reaction N-(5-phospho-beta-D-ribosyl)anthranilate = 1-(2-carboxyphenylamino)-1-deoxy-D-ribulose 5-phosphate. The protein operates within amino-acid biosynthesis; L-histidine biosynthesis; L-histidine from 5-phospho-alpha-D-ribose 1-diphosphate: step 4/9. It functions in the pathway amino-acid biosynthesis; L-tryptophan biosynthesis; L-tryptophan from chorismate: step 3/5. Involved in both the histidine and tryptophan biosynthetic pathways. This chain is Phosphoribosyl isomerase A, found in Mycobacterium ulcerans (strain Agy99).